We begin with the raw amino-acid sequence, 244 residues long: Large ribosomal subunit protein bL25 (244 aa).

Residues 197–244 (ADVEAEAAEAALAKEAATEAAEEEETEKPASEAEASGEAEQADTDKKE) are disordered. Positions 204 to 215 (AEAALAKEAATE) are enriched in low complexity.

The protein belongs to the bacterial ribosomal protein bL25 family. CTC subfamily. In terms of assembly, part of the 50S ribosomal subunit; part of the 5S rRNA/L5/L18/L25 subcomplex. Contacts the 5S rRNA. Binds to the 5S rRNA independently of L5 and L18.

This is one of the proteins that binds to the 5S RNA in the ribosome where it forms part of the central protuberance. The protein is Large ribosomal subunit protein bL25 of Coxiella burnetii (strain CbuK_Q154) (Coxiella burnetii (strain Q154)).